The chain runs to 276 residues: Shikimate dehydrogenase (NADP(+)) (276 aa).

Shikimate is bound by residues 15 to 17 and threonine 62; that span reads SKS. Residue lysine 66 is the Proton acceptor of the active site. Glutamate 78 serves as a coordination point for NADP(+). The shikimate site is built by asparagine 87 and aspartate 103. Residues 128-132 and isoleucine 217 contribute to the NADP(+) site; that span reads GAGGA. Tyrosine 219 serves as a coordination point for shikimate. Glycine 240 is an NADP(+) binding site.

Belongs to the shikimate dehydrogenase family. As to quaternary structure, homodimer.

The catalysed reaction is shikimate + NADP(+) = 3-dehydroshikimate + NADPH + H(+). The protein operates within metabolic intermediate biosynthesis; chorismate biosynthesis; chorismate from D-erythrose 4-phosphate and phosphoenolpyruvate: step 4/7. Its function is as follows. Involved in the biosynthesis of the chorismate, which leads to the biosynthesis of aromatic amino acids. Catalyzes the reversible NADPH linked reduction of 3-dehydroshikimate (DHSA) to yield shikimate (SA). The sequence is that of Shikimate dehydrogenase (NADP(+)) from Lysinibacillus sphaericus (strain C3-41).